We begin with the raw amino-acid sequence, 445 residues long: Selenocysteine lyase (445 aa).

Met1 carries the post-translational modification N-acetylmethionine. The tract at residues 1–28 (MEAAVAPGRDAPAPAASQPSGCGKHNSP) is disordered. Ser129 is subject to Phosphoserine. Lys259 carries the N6-(pyridoxal phosphate)lysine modification. The active-site S-selanylcysteine intermediate is the Cys388.

The protein belongs to the class-V pyridoxal-phosphate-dependent aminotransferase family. Homodimer. The cofactor is pyridoxal 5'-phosphate.

The protein resides in the cytoplasm. It is found in the cytosol. The catalysed reaction is L-selenocysteine + AH2 = hydrogenselenide + L-alanine + A + H(+). Its function is as follows. Catalyzes the decomposition of L-selenocysteine to L-alanine and elemental selenium. This is Selenocysteine lyase (SCLY) from Homo sapiens (Human).